Consider the following 218-residue polypeptide: Histone H1.1 (218 aa).

The tract at residues 1 to 42 is disordered; it reads MSEVALPAPAASTSPEKPSAGKKAKKPAKAAAAAKKKPAGPS. An N-acetylserine modification is found at Ser2. Residues Ser2 and Ser12 each carry the phosphoserine modification. The residue at position 17 (Lys17) is an N6-acetyllysine. A compositionally biased stretch (basic residues) spans 20–38; the sequence is AGKKAKKPAKAAAAAKKKP. Residue Lys37 is modified to N6-(beta-hydroxybutyryl)lysine. The H15 domain maps to 39-112; the sequence is AGPSVSELIV…GASGSFKLNK (74 aa). The residue at position 44 (Ser44) is a Phosphoserine. Lys55 carries the N6-(beta-hydroxybutyryl)lysine modification. Arg57 is subject to Citrulline. Lys67 is subject to N6-(beta-hydroxybutyryl)lysine. Lys78 bears the N6-acetyllysine mark. Lys88 carries the N6-(beta-hydroxybutyryl)lysine modification. Lys93 is subject to N6-(beta-hydroxybutyryl)lysine; alternate. Residue Lys93 is modified to N6-acetyllysine; alternate. A Phosphoserine; by PKC modification is found at Ser107. Lys109 bears the N6-(beta-hydroxybutyryl)lysine mark. The interval 116-218 is disordered; it reads SVDAKPTATK…KPKKAAPKKK (103 aa). Positions 119–149 are enriched in low complexity; the sequence is AKPTATKVATKTKVTSASKKPKKASGAAAAK. Lys125 carries the post-translational modification N6-acetyllysine. Basic residues-rich tracts occupy residues 150–183 and 190–218; these read KSVKTPKKARKSVLTKKSSKSPKKPKAVKPKKVA and KAVKPKGAKVKVTKPKTAAKPKKAAPKKK. Thr206 is modified (phosphothreonine).

This sequence belongs to the histone H1/H5 family. Interacts with DFFB. In terms of processing, H1 histones are progressively phosphorylated during the cell cycle, becoming maximally phosphorylated during late G2 phase and M phase, and being dephosphorylated sharply thereafter. Post-translationally, citrullination at Arg-57 (H1R54ci) by PADI4 takes place within the DNA-binding site of H1 and results in its displacement from chromatin and global chromatin decondensation, thereby promoting pluripotency and stem cell maintenance.

It is found in the nucleus. It localises to the chromosome. H1 histones bind to linker DNA between nucleosomes forming the macromolecular structure known as the chromatin fiber. H1 histones are necessary for the condensation of nucleosome chains into higher-order structured fibers. Also acts as a regulator of individual gene transcription through chromatin remodeling. This Bos taurus (Bovine) protein is Histone H1.1.